Consider the following 477-residue polypeptide: Mitochondrial adenyl nucleotide antiporter SLC25A24 (477 aa).

Residues 1–173 (MLRWLRGFVL…RFWKHSTGID (173 aa)) form a regulatory N-terminal domain region. Over 1–197 (MLRWLRGFVL…EKKSGQWWRQ (197 aa)) the chain is Mitochondrial intermembrane. EF-hand domains lie at 19–54 (EPPT…LGIP), 61–85 (EKIF…KYLK), 86–121 (DHEK…LGLT), and 122–157 (ISEQ…NPVT). Positions 32, 34, 36, 38, 43, 68, 70, 72, 74, 79, 99, 101, 103, 105, 110, 135, 137, 139, 141, and 146 each coordinate Ca(2+). Residues 159-168 (IEEIIRFWKH) form a linker region region. Positions 174–477 (IGDSLTIPDE…MKQTLGVTQK (304 aa)) are C-terminal transmembrane transporter domain. 3 Solcar repeats span residues 192–278 (GQWW…YKKL), 286–371 (IGTF…LKSH), and 383–471 (PGVM…MKQT). A helical membrane pass occupies residues 198–215 (LLAGGVAGAVSRTSTAPL). At 216–252 (DRLKVMMQVHGSKSAKMNIYGGFQQMVKEGGIRSLWR) the chain is on the mitochondrial matrix side. The chain crosses the membrane as a helical span at residues 253–272 (GNGTNVIKIAPETAVKFWAY). The Mitochondrial intermembrane segment spans residues 273–295 (EQYKKLLTEEGQKIGTFERFVSG). A helical membrane pass occupies residues 296 to 309 (SMAGATAQTFIYPM). The Mitochondrial matrix portion of the chain corresponds to 310 to 345 (EVLKTRLAVGKTGQYSGMFDCAKKILKYEGMGAFYK). Lysine 320 is modified (N6-acetyllysine; alternate). Lysine 320 is modified (N6-succinyllysine; alternate). Lysine 336 carries the post-translational modification N6-acetyllysine. A helical membrane pass occupies residues 346-365 (GYVPNLLGIIPYAGIDLAVY). Residues 366-388 (ELLKSHWLDNFAKDSVNPGVMVL) are Mitochondrial intermembrane-facing. A helical membrane pass occupies residues 389-406 (LGCGALSSTCGQLASYPL). The Mitochondrial matrix portion of the chain corresponds to 407-445 (ALVRTRMQAQAMIEKSPQLNMVGLFRRILSKEGLPGLYR). Lysine 437 carries the post-translational modification N6-acetyllysine; alternate. Position 437 is an N6-succinyllysine; alternate (lysine 437). A helical transmembrane segment spans residues 446-465 (GITPNFMKVLPAVGISYVVY). Topologically, residues 466–477 (ENMKQTLGVTQK) are mitochondrial intermembrane.

This sequence belongs to the mitochondrial carrier (TC 2.A.29) family. In terms of assembly, monomer.

It localises to the mitochondrion inner membrane. The catalysed reaction is Mg(2+)(out) + phosphate(in) + ATP(out) = Mg(2+)(in) + phosphate(out) + ATP(in). It carries out the reaction ADP(out) + phosphate(in) + H(+)(out) = ADP(in) + phosphate(out) + H(+)(in). It catalyses the reaction AMP(out) + phosphate(in) = AMP(in) + phosphate(out). The enzyme catalyses phosphate(in) + ATP(out) + 2 H(+)(out) = phosphate(out) + ATP(in) + 2 H(+)(in). The catalysed reaction is dADP(in) + ADP(out) = dADP(out) + ADP(in). It carries out the reaction Mg(2+)(in) + ADP(out) + ATP(in) + H(+)(out) = Mg(2+)(out) + ADP(in) + ATP(out) + H(+)(in). It catalyses the reaction ADP(out) + diphosphate(in) = ADP(in) + diphosphate(out). The enzyme catalyses dAMP(in) + ADP(out) + H(+)(out) = dAMP(out) + ADP(in) + H(+)(in). The catalysed reaction is 3'-AMP(in) + ADP(out) + H(+)(out) = 3'-AMP(out) + ADP(in) + H(+)(in). It carries out the reaction dAMP(out) + phosphate(in) = dAMP(in) + phosphate(out). It catalyses the reaction 3'-AMP(out) + phosphate(in) = 3'-AMP(in) + phosphate(out). The enzyme catalyses dADP(out) + phosphate(in) + H(+)(out) = dADP(in) + phosphate(out) + H(+)(in). Its activity is regulated as follows. Activated by an increase in cytosolic calcium levels that induce a conformational change of the N-terminal regulatory domain, uncapping the channel and allowing transport. Inhibited by bathophenanthroline, mersalyl, p-hydroxymercuribenzoate, bromcresol purple and tannic acid. Electroneutral antiporter that mediates the transport of adenyl nucleotides through the inner mitochondrial membrane. Originally identified as an ATP-magnesium/inorganic phosphate antiporter, it also acts as a broad specificity adenyl nucleotide antiporter. By regulating the mitochondrial matrix adenyl nucleotide pool could adapt to changing cellular energetic demands and indirectly regulate adenyl nucleotide-dependent metabolic pathways. In vitro, a low activity is also observed with guanyl and pyrimidine nucleotides. May play a role in protecting cells against oxidative stress-induced cell death, by buffering calcium levels in the mitochondrial matrix through the formation of calcium-phosphate precipitates. In Bos taurus (Bovine), this protein is Mitochondrial adenyl nucleotide antiporter SLC25A24 (SLC25A24).